Consider the following 389-residue polypeptide: Lipid-A-disaccharide synthase (389 aa).

This sequence belongs to the LpxB family.

The catalysed reaction is a lipid X + a UDP-2-N,3-O-bis[(3R)-3-hydroxyacyl]-alpha-D-glucosamine = a lipid A disaccharide + UDP + H(+). It participates in bacterial outer membrane biogenesis; LPS lipid A biosynthesis. In terms of biological role, condensation of UDP-2,3-diacylglucosamine and 2,3-diacylglucosamine-1-phosphate to form lipid A disaccharide, a precursor of lipid A, a phosphorylated glycolipid that anchors the lipopolysaccharide to the outer membrane of the cell. The polypeptide is Lipid-A-disaccharide synthase (Burkholderia multivorans (strain ATCC 17616 / 249)).